A 197-amino-acid chain; its full sequence is Imidazoleglycerol-phosphate dehydratase (197 aa).

The protein belongs to the imidazoleglycerol-phosphate dehydratase family.

The protein localises to the cytoplasm. The catalysed reaction is D-erythro-1-(imidazol-4-yl)glycerol 3-phosphate = 3-(imidazol-4-yl)-2-oxopropyl phosphate + H2O. The protein operates within amino-acid biosynthesis; L-histidine biosynthesis; L-histidine from 5-phospho-alpha-D-ribose 1-diphosphate: step 6/9. This chain is Imidazoleglycerol-phosphate dehydratase, found in Teredinibacter turnerae (strain ATCC 39867 / T7901).